Reading from the N-terminus, the 557-residue chain is MDFNNIPLATIKSSDDKGKDFIVEMTTRPSETKKKVPFSEDMREIPSLPNEEEANATDPQANEVADENGEGFEAEKISSWIWVLSAVAGISGLLFGYDTGVISGALAVLGSDLGHVLSSGQKELITSATSFAALISATTSGWLADWVGRKRLLLCADAIFVIGSVIMAASRNVAMMVVGRFIVGYGIGLTSLIVPMYITELAPARLRGRLVIIYVVFITGGQLIAYSLNAAFEHVHQGWRIMFGIGAAPALGQLISLFWTPESPRYLLRHNHVEKVYKILSRIHPEAKPAEIAYKVSLIQEGVKVDFPEGNKFQHFFHSLKVLFTVPSNRRSLFIGCFLQWFQQFSGTNAIQYFSAIIFQSVGFKNSISVSIVVGATNFVFTIVAFMFIDRIGRRRILLCTSAVMIAGLALCAIAYHFLPADTTQNTNSGWQYVVLASIIIFLASYASGIGNIPWQQAELFPMEVRALGAGFSTAINWVGNLIISASFLTMMESITPTGTFALFAGFCFVGLVTSYFTYPELAGMSIENIHKLLEKGFWQAVKESTKRVRKGRIDEA.

Residues 1–76 lie on the Cytoplasmic side of the membrane; the sequence is MDFNNIPLAT…ENGEGFEAEK (76 aa). Residues 24 to 69 are disordered; it reads EMTTRPSETKKKVPFSEDMREIPSLPNEEEANATDPQANEVADENG. A compositionally biased stretch (basic and acidic residues) spans 30 to 44; that stretch reads SETKKKVPFSEDMRE. A helical membrane pass occupies residues 77–97; it reads ISSWIWVLSAVAGISGLLFGY. The Extracellular portion of the chain corresponds to 98–99; that stretch reads DT. A helical transmembrane segment spans residues 100-120; that stretch reads GVISGALAVLGSDLGHVLSSG. Over 121–123 the chain is Cytoplasmic; the sequence is QKE. Residues 124-144 traverse the membrane as a helical segment; sequence LITSATSFAALISATTSGWLA. At 145–157 the chain is on the extracellular side; that stretch reads DWVGRKRLLLCAD. A helical membrane pass occupies residues 158–178; it reads AIFVIGSVIMAASRNVAMMVV. Topologically, residues 179–180 are cytoplasmic; it reads GR. A helical transmembrane segment spans residues 181-201; sequence FIVGYGIGLTSLIVPMYITEL. Residues 202–209 are Extracellular-facing; sequence APARLRGR. A helical transmembrane segment spans residues 210–230; sequence LVIIYVVFITGGQLIAYSLNA. Residues 231–240 are Cytoplasmic-facing; it reads AFEHVHQGWR. Residues 241–261 traverse the membrane as a helical segment; it reads IMFGIGAAPALGQLISLFWTP. The Extracellular portion of the chain corresponds to 262–367; it reads ESPRYLLRHN…IFQSVGFKNS (106 aa). A helical membrane pass occupies residues 368 to 388; it reads ISVSIVVGATNFVFTIVAFMF. Residues 389 to 396 lie on the Cytoplasmic side of the membrane; the sequence is IDRIGRRR. The chain crosses the membrane as a helical span at residues 397–417; the sequence is ILLCTSAVMIAGLALCAIAYH. Topologically, residues 418–432 are extracellular; it reads FLPADTTQNTNSGWQ. The chain crosses the membrane as a helical span at residues 433-453; sequence YVVLASIIIFLASYASGIGNI. At 454–468 the chain is on the cytoplasmic side; that stretch reads PWQQAELFPMEVRAL. A helical transmembrane segment spans residues 469-489; sequence GAGFSTAINWVGNLIISASFL. Residues 490–498 are Extracellular-facing; the sequence is TMMESITPT. The chain crosses the membrane as a helical span at residues 499-519; sequence GTFALFAGFCFVGLVTSYFTY. Residues 520-557 lie on the Cytoplasmic side of the membrane; sequence PELAGMSIENIHKLLEKGFWQAVKESTKRVRKGRIDEA.

The protein belongs to the major facilitator superfamily. Sugar transporter (TC 2.A.1.1) family.

The protein resides in the membrane. It carries out the reaction myo-inositol(out) + H(+)(out) = myo-inositol(in) + H(+)(in). Functionally, transporter for myo-inositol. This Schizosaccharomyces pombe (strain 972 / ATCC 24843) (Fission yeast) protein is Myo-inositol transporter 2 (itr2).